The chain runs to 101 residues: Growth-regulated alpha protein (101 aa).

The first 28 residues, 1–28 (MAPATRSLLRAPLLLLLLLLATSRLATG), serve as a signal peptide directing secretion. Disulfide bonds link cysteine 37-cysteine 63 and cysteine 39-cysteine 79.

It belongs to the intercrine alpha (chemokine CxC) family.

Its subcellular location is the secreted. Its function is as follows. Has chemotactic activity for neutrophils. In Cricetulus griseus (Chinese hamster), this protein is Growth-regulated alpha protein (CXCL1).